Consider the following 375-residue polypeptide: Chaperone protein DnaJ (375 aa).

Positions 5 to 69 (DYYEVLGVSK…QKRAQYDQFG (65 aa)) constitute a J domain. The CR-type zinc-finger motif lies at 132 to 214 (GKETIIEIPR…CGGTGKVKKR (83 aa)). Positions 145, 148, 162, 165, 188, 191, 202, and 205 each coordinate Zn(2+). CXXCXGXG motif repeat units lie at residues 145–152 (CETCKGSG), 162–169 (CSHCGGSG), 188–195 (CHHCEGTG), and 202–209 (CSDCGGTG).

This sequence belongs to the DnaJ family. Homodimer. It depends on Zn(2+) as a cofactor.

It is found in the cytoplasm. In terms of biological role, participates actively in the response to hyperosmotic and heat shock by preventing the aggregation of stress-denatured proteins and by disaggregating proteins, also in an autonomous, DnaK-independent fashion. Unfolded proteins bind initially to DnaJ; upon interaction with the DnaJ-bound protein, DnaK hydrolyzes its bound ATP, resulting in the formation of a stable complex. GrpE releases ADP from DnaK; ATP binding to DnaK triggers the release of the substrate protein, thus completing the reaction cycle. Several rounds of ATP-dependent interactions between DnaJ, DnaK and GrpE are required for fully efficient folding. Also involved, together with DnaK and GrpE, in the DNA replication of plasmids through activation of initiation proteins. This is Chaperone protein DnaJ from Bacillus velezensis (strain DSM 23117 / BGSC 10A6 / LMG 26770 / FZB42) (Bacillus amyloliquefaciens subsp. plantarum).